A 303-amino-acid polypeptide reads, in one-letter code: Magainins (303 aa).

The first 18 residues, 1–18 (MFKGLFICSLIAVICANA), serve as a signal peptide directing secretion. 13 propeptides span residues 19–26 (LPQPEASA), 33–36 (REVR), 62–72 (DAEAVGPEAFA), 79–82 (REVR), 108–118 (DAEAVGPEAFA), 125–128 (REVR), 154–164 (DAEAVGPEAFA), 171–174 (REVR), 200–210 (DAEAVGPEAFA), 217–220 (REVR), 246–256 (DAEAVGPEAFA), 263–266 (REVR), and 292–303 (DAEAVDDRRWVE).

Belongs to the gastrin/cholecystokinin family. Magainin subfamily. In terms of tissue distribution, synthesized in the stomach and stored in a novel granular multinucleated cell in the gastric mucosa. It is stored as active, processed peptides in large granules within the granular gland secretions of the skin.

It is found in the secreted. In terms of biological role, antimicrobial peptides that inhibit the growth of numerous species of bacteria and fungi and induce osmotic lysis of protozoa. Rapidly inactivates channel catfish herpesvirus (ED(50)=48 uM) over a wide temperature range. Magainins are membrane lytic agents. This is Magainins (magainins) from Xenopus laevis (African clawed frog).